The following is a 449-amino-acid chain: Kynurenine 3-monooxygenase (449 aa).

This sequence belongs to the aromatic-ring hydroxylase family. KMO subfamily. FAD is required as a cofactor.

The enzyme catalyses L-kynurenine + NADPH + O2 + H(+) = 3-hydroxy-L-kynurenine + NADP(+) + H2O. Its pathway is cofactor biosynthesis; NAD(+) biosynthesis; quinolinate from L-kynurenine: step 1/3. Catalyzes the hydroxylation of L-kynurenine (L-Kyn) to form 3-hydroxy-L-kynurenine (L-3OHKyn). Required for synthesis of quinolinic acid. The chain is Kynurenine 3-monooxygenase from Legionella pneumophila (strain Corby).